A 372-amino-acid polypeptide reads, in one-letter code: Probable arabinan endo-1,5-alpha-L-arabinosidase B (372 aa).

Positions 1–16 (MTVLVALFCLVTWTLC) are cleaved as a signal peptide. Residues 23–34 (STQGTQQPQQPE) show a composition bias toward low complexity. Residues 23 to 52 (STQGTQQPQQPEKTPHPHPQPEDAFPPTHA) are disordered. Aspartate 59 functions as the Proton acceptor in the catalytic mechanism. The N-linked (GlcNAc...) asparagine glycan is linked to asparagine 120. The active-site Proton donor is glutamate 252. An N-linked (GlcNAc...) asparagine glycan is attached at asparagine 363.

This sequence belongs to the glycosyl hydrolase 43 family.

The protein resides in the secreted. It carries out the reaction Endohydrolysis of (1-&gt;5)-alpha-arabinofuranosidic linkages in (1-&gt;5)-arabinans.. Its pathway is glycan metabolism; L-arabinan degradation. Its function is as follows. Endo-1,5-alpha-L-arabinanase involved in degradation of pectin. Its preferred substrate is linear 1,5-alpha-L-arabinan. The sequence is that of Probable arabinan endo-1,5-alpha-L-arabinosidase B (abnB) from Aspergillus fumigatus (strain CBS 144.89 / FGSC A1163 / CEA10) (Neosartorya fumigata).